We begin with the raw amino-acid sequence, 506 residues long: RNA-splicing ligase RtcB homolog 1 (506 aa).

Mn(2+) contacts are provided by D120, C123, H228, H260, and H354. A GMP-binding site is contributed by N227–E231. Residues H354 to N355, G403 to M406, S410, H429 to G432, and K505 contribute to the GMP site. H429 serves as the catalytic GMP-histidine intermediate.

This sequence belongs to the RtcB family. Catalytic component of the tRNA-splicing ligase complex. Mn(2+) serves as cofactor.

The enzyme catalyses a 3'-end 3'-phospho-ribonucleotide-RNA + a 5'-end dephospho-ribonucleoside-RNA + GTP = a ribonucleotidyl-ribonucleotide-RNA + GMP + diphosphate. The catalysed reaction is a 3'-end 2',3'-cyclophospho-ribonucleotide-RNA + a 5'-end dephospho-ribonucleoside-RNA + GTP + H2O = a ribonucleotidyl-ribonucleotide-RNA + GMP + diphosphate + H(+). In terms of biological role, catalytic subunit of the tRNA-splicing ligase complex that acts by directly joining spliced tRNA halves to mature-sized tRNAs by incorporating the precursor-derived splice junction phosphate into the mature tRNA as a canonical 3',5'-phosphodiester. May act as an RNA ligase with broad substrate specificity, and may function toward other RNAs. The polypeptide is RNA-splicing ligase RtcB homolog 1 (Culex quinquefasciatus (Southern house mosquito)).